The primary structure comprises 197 residues: uncharacterized protein (197 aa).

A signal peptide spans 1–23; that stretch reads MSARAPKELRLALPPCLLNRTFA. Residues Asn19 and Asn26 are each glycosylated (N-linked (GlcNAc...) asparagine). Topologically, residues 24 to 61 are extracellular; it reads SPNASGSGNTGARGPGAGGSGTCITQVGQQLFQSFSST. A helical transmembrane segment spans residues 62-82; sequence LVLIVLVTLIFCLIVLSLSTF. Residues 83–197 are Cytoplasmic-facing; sequence HIHKRRMKKR…EGLLQTVVLS (115 aa). The disordered stretch occupies residues 94 to 180; sequence MQRAQEEYER…SSPQGAHAAS (87 aa). Basic and acidic residues-rich tracts occupy residues 96-107 and 125-136; these read RAQEEYERDHCS and HTKETRLERQPR. Low complexity predominate over residues 147 to 161; it reads SSSSSSSPGLLCQGP. Residues 162 to 171 are compositionally biased toward pro residues; sequence CAPPPPPPAS.

It localises to the membrane. This is an uncharacterized protein from Macaca fascicularis (Crab-eating macaque).